We begin with the raw amino-acid sequence, 387 residues long: 1-deoxy-D-xylulose 5-phosphate reductoisomerase (387 aa).

Residues Thr-10, Gly-11, Ile-13, Asn-38, and Asn-122 each contribute to the NADPH site. Residue Lys-123 participates in 1-deoxy-D-xylulose 5-phosphate binding. Glu-124 contributes to the NADPH binding site. A Mn(2+)-binding site is contributed by Asp-148. Residues Ser-149, Glu-150, Ser-174, and His-197 each coordinate 1-deoxy-D-xylulose 5-phosphate. Glu-150 provides a ligand contact to Mn(2+). Gly-203 contacts NADPH. 4 residues coordinate 1-deoxy-D-xylulose 5-phosphate: Ser-210, Asn-215, Lys-216, and Glu-219. Glu-219 is a binding site for Mn(2+).

The protein belongs to the DXR family. Mg(2+) serves as cofactor. The cofactor is Mn(2+).

The enzyme catalyses 2-C-methyl-D-erythritol 4-phosphate + NADP(+) = 1-deoxy-D-xylulose 5-phosphate + NADPH + H(+). The protein operates within isoprenoid biosynthesis; isopentenyl diphosphate biosynthesis via DXP pathway; isopentenyl diphosphate from 1-deoxy-D-xylulose 5-phosphate: step 1/6. Catalyzes the NADPH-dependent rearrangement and reduction of 1-deoxy-D-xylulose-5-phosphate (DXP) to 2-C-methyl-D-erythritol 4-phosphate (MEP). This Ehrlichia ruminantium (strain Gardel) protein is 1-deoxy-D-xylulose 5-phosphate reductoisomerase.